We begin with the raw amino-acid sequence, 244 residues long: NAD-dependent protein deacetylase (244 aa).

Residues M1–A244 enclose the Deacetylase sirtuin-type domain. A27, T31, F38, R39, Q107, I109, D110, and H125 together coordinate NAD(+). F38 contacts nicotinamide. Nicotinamide is bound by residues I109 and D110. Residue H125 is the Proton acceptor of the active site. Zn(2+) contacts are provided by C133, C136, C153, and C156. NAD(+)-binding residues include S192, S193, N217, and I235.

It belongs to the sirtuin family. Class U subfamily. Zn(2+) serves as cofactor.

It localises to the cytoplasm. The catalysed reaction is N(6)-acetyl-L-lysyl-[protein] + NAD(+) + H2O = 2''-O-acetyl-ADP-D-ribose + nicotinamide + L-lysyl-[protein]. Functionally, NAD-dependent protein deacetylase which modulates the activities of several enzymes which are inactive in their acetylated form. This is NAD-dependent protein deacetylase from Chromobacterium violaceum (strain ATCC 12472 / DSM 30191 / JCM 1249 / CCUG 213 / NBRC 12614 / NCIMB 9131 / NCTC 9757 / MK).